We begin with the raw amino-acid sequence, 470 residues long: Argininosuccinate lyase (470 aa).

Belongs to the lyase 1 family. Argininosuccinate lyase subfamily.

It is found in the cytoplasm. It carries out the reaction 2-(N(omega)-L-arginino)succinate = fumarate + L-arginine. It functions in the pathway amino-acid biosynthesis; L-arginine biosynthesis; L-arginine from L-ornithine and carbamoyl phosphate: step 3/3. This chain is Argininosuccinate lyase, found in Leptospira borgpetersenii serovar Hardjo-bovis (strain JB197).